Reading from the N-terminus, the 691-residue chain is Elongation factor G (691 aa).

Residues 8-282 form the tr-type G domain; that stretch reads ERVRNIGIAA…AVVDYLPAPV (275 aa). GTP is bound by residues 17 to 24, 81 to 85, and 135 to 138; these read AHIDAGKT, DTPGH, and NKMD.

It belongs to the TRAFAC class translation factor GTPase superfamily. Classic translation factor GTPase family. EF-G/EF-2 subfamily.

It is found in the cytoplasm. Functionally, catalyzes the GTP-dependent ribosomal translocation step during translation elongation. During this step, the ribosome changes from the pre-translocational (PRE) to the post-translocational (POST) state as the newly formed A-site-bound peptidyl-tRNA and P-site-bound deacylated tRNA move to the P and E sites, respectively. Catalyzes the coordinated movement of the two tRNA molecules, the mRNA and conformational changes in the ribosome. This is Elongation factor G from Prochlorococcus marinus (strain MIT 9313).